Reading from the N-terminus, the 940-residue chain is Isoleucine--tRNA ligase (940 aa).

The 'HIGH' region signature appears at 58–68 (PYANGSIHIGH). E564 contacts L-isoleucyl-5'-AMP. The 'KMSKS' region motif lies at 605-609 (KMSKS). Residue K608 participates in ATP binding. Residues C903, C906, C923, and C926 each coordinate Zn(2+).

This sequence belongs to the class-I aminoacyl-tRNA synthetase family. IleS type 1 subfamily. As to quaternary structure, monomer. Requires Zn(2+) as cofactor.

The protein localises to the cytoplasm. It carries out the reaction tRNA(Ile) + L-isoleucine + ATP = L-isoleucyl-tRNA(Ile) + AMP + diphosphate. Its function is as follows. Catalyzes the attachment of isoleucine to tRNA(Ile). As IleRS can inadvertently accommodate and process structurally similar amino acids such as valine, to avoid such errors it has two additional distinct tRNA(Ile)-dependent editing activities. One activity is designated as 'pretransfer' editing and involves the hydrolysis of activated Val-AMP. The other activity is designated 'posttransfer' editing and involves deacylation of mischarged Val-tRNA(Ile). The sequence is that of Isoleucine--tRNA ligase from Shewanella baltica (strain OS155 / ATCC BAA-1091).